The sequence spans 194 residues: Imidazoleglycerol-phosphate dehydratase (194 aa).

Belongs to the imidazoleglycerol-phosphate dehydratase family.

The protein resides in the cytoplasm. It carries out the reaction D-erythro-1-(imidazol-4-yl)glycerol 3-phosphate = 3-(imidazol-4-yl)-2-oxopropyl phosphate + H2O. Its pathway is amino-acid biosynthesis; L-histidine biosynthesis; L-histidine from 5-phospho-alpha-D-ribose 1-diphosphate: step 6/9. The polypeptide is Imidazoleglycerol-phosphate dehydratase (Bacillus cereus (strain AH820)).